We begin with the raw amino-acid sequence, 499 residues long: Topoisomerase I damage affected protein 11 (499 aa).

The disordered stretch occupies residues 32-62 (RKTGRKIRSASSNGYRLEHHRTSSAGSMHSQ). Residues 179–231 (ALLQSLATKELELLECKQKIEDLKKQTQHEEQNYTRRARELHELKEQVSKHLD) are a coiled coil. Residue T236 is modified to Phosphothreonine. Residues S244 and S286 each carry the phosphoserine modification. 3 disordered regions span residues 252 to 306 (LESR…SKQS), 332 to 377 (WDDS…SVSR), and 400 to 499 (DVIT…QKLS). Over residues 257 to 287 (ENAGNSSLPSSVSKPKNMGHQSTNQSRSVSP) the composition is skewed to polar residues. Residues 290-301 (IQERRQRDDSSD) are compositionally biased toward basic and acidic residues. 2 stretches are compositionally biased toward polar residues: residues 332-359 (WDDS…QQYD) and 368-377 (KSPSQGSVSR). A compositionally biased stretch (basic and acidic residues) spans 403-421 (TDNRCDPVYKSDRQHEQKK). Basic residues predominate over residues 470 to 479 (TREKKSKRSS).

It belongs to the TDA11 family.

It is found in the cytoplasm. This Saccharomyces cerevisiae (strain Zymaflore VL3) (Baker's yeast) protein is Topoisomerase I damage affected protein 11 (TDA11).